The chain runs to 39 residues: Omega-theraphotoxin-Bs1b (39 aa).

3 disulfides stabilise this stretch: Cys4/Cys25, Cys8/Cys31, and Cys17/Cys36.

Belongs to the neurotoxin 12 (Hwtx-2) family. 06 (TXP1) subfamily. Expressed by the venom gland.

The protein localises to the secreted. Functionally, inhibits voltage-gated calcium channels (Cav) in rat cerebellar granule cells. Has insecticidal activity. The chain is Omega-theraphotoxin-Bs1b from Brachypelma smithi (Mexican red knee tarantula).